A 132-amino-acid chain; its full sequence is Small ribosomal subunit protein uS8 (132 aa).

It belongs to the universal ribosomal protein uS8 family. As to quaternary structure, part of the 30S ribosomal subunit. Contacts proteins S5 and S12.

Its function is as follows. One of the primary rRNA binding proteins, it binds directly to 16S rRNA central domain where it helps coordinate assembly of the platform of the 30S subunit. This Kineococcus radiotolerans (strain ATCC BAA-149 / DSM 14245 / SRS30216) protein is Small ribosomal subunit protein uS8.